Reading from the N-terminus, the 540-residue chain is Phosphatidylinositol 4-phosphate 5-kinase type-1 beta (540 aa).

Residues 1-23 are disordered; it reads MSSVTENGDVTAGKPNEEKTYKK. The region spanning 25–395 is the PIPK domain; the sequence is TSSAIKGAIQ…RFLKFMNTRV (371 aa).

The protein localises to the cytoplasm. It is found in the cytosol. Its subcellular location is the cell membrane. The protein resides in the endomembrane system. The enzyme catalyses a 1,2-diacyl-sn-glycero-3-phospho-(1D-myo-inositol 4-phosphate) + ATP = a 1,2-diacyl-sn-glycero-3-phospho-(1D-myo-inositol-4,5-bisphosphate) + ADP + H(+). It catalyses the reaction 1-octadecanoyl-2-(5Z,8Z,11Z,14Z)-eicosatetraenoyl-sn-glycero-3-phospho-1D-myo-inositol 4-phosphate + ATP = 1-octadecanoyl-2-(5Z,8Z,11Z,14Z)-eicosatetraenoyl-sn-glycero-3-phospho-1D-myo-inositol 4,5-bisphosphate + ADP + H(+). The catalysed reaction is 1-octadecanoyl-2-(9Z)-octadecenoyl-sn-glycero-3-phospho-1D-myo-inositol 4-phosphate + ATP = 1-octadecanoyl-2-(9Z)-octadecenoyl-sn-glycero-3-phospho-1D-myo-inositol 4,5-bisphosphate + ADP + H(+). It carries out the reaction 1-octadecanoyl-2-(9Z)-octadecenoyl-sn-glycero-3-phospho-1D-myo-inositol + ATP = 1-octadecanoyl-2-(9Z)-octadecenoyl-sn-glycero-3-phospho-1D-myo-inositol 5-phosphate + ADP + H(+). The enzyme catalyses 1-octadecanoyl-2-(9Z,12Z)-octadecadienoyl-sn-glycero-3-phospho-1D-myo-inositol + ATP = 1-octadecanoyl-2-(9Z,12Z)-octadecadienoyl-sn-glycero-3-phospho-1D-myo-inositol 5-phosphate + ADP + H(+). It catalyses the reaction 1-octadecanoyl-2-(5Z,8Z,11Z,14Z-eicosatetraenoyl)-sn-glycero-3-phospho-(1D-myo-inositol) + ATP = 1-octadecanoyl-2-(5Z,8Z,11Z,14Z)-eicosatetraenoyl-sn-glycero-3-phospho-1D-myo-inositol 5-phosphate + ADP + H(+). The catalysed reaction is 1,2-di-(9Z,12Z)-octadecadienoyl-sn-glycero-3-phospho-1D-myo-inositol + ATP = 1,2-di(9Z,12Z)-octadecadienoyl-sn-glycero-3-phospho-1D-myo-inositol 5-phosphate + ADP + H(+). Functionally, catalyzes the phosphorylation of phosphatidylinositol 4-phosphate (PtdIns(4)P/PI4P) to form phosphatidylinositol 4,5-bisphosphate (PtdIns(4,5)P2/PIP2), a lipid second messenger that regulates several cellular processes such as signal transduction, vesicle trafficking, actin cytoskeleton dynamics, cell adhesion, and cell motility. PtdIns(4,5)P2 can directly act as a second messenger or can be utilized as a precursor to generate other second messengers: inositol 1,4,5-trisphosphate (IP3), diacylglycerol (DAG) or phosphatidylinositol-3,4,5-trisphosphate (PtdIns(3,4,5)P3/PIP3). The sequence is that of Phosphatidylinositol 4-phosphate 5-kinase type-1 beta (PIP5K1B) from Gallus gallus (Chicken).